Consider the following 523-residue polypeptide: MDASSTPGAIWVVLTVILAAIPIWVCHMVNTLWLRPKRLERHLRAQGLHGDPYKLSLDNSKQTYMLKLQQEAQSKSIGLSKDDAAPRIFSLAHQTVHKYGKNSFAWEGTAPKVIITDPEQIKEVFNKIQDFPKPKLNPIAKYISIGLVQYEGDKWAKHRKIINPAFHLEKLKGMLPAFSHSCHEMISKWKGLLSSDGTCEVDVWPFLQNLTCDVISRTAFGSSYAEGAKIFELLKRQGYALMTARYARIPLWWLLPSTTKRRMKEIERGIRDSLEGIIRKREKALKSGKSTDDDLLGILLQSNHIENKGDENSKSAGMTTQEVMEECKLFYLAGQETTAALLAWTMVLLGKHPEWQARARQEVLQVFGNQNPNFEGLGRLKIVTMILYEVLRLYPPGIYLTRALRKDLKLGNLLLPAGVQVSVPILLIHHDEGIWGNDAKEFNPERFAEGIAKATKGQVCYFPFGWGPRICVGQNFALLEAKIVLSLLLQNFSFELSPTYAHVPTTVLTLQPKHGAPIILHKL.

Residues 9 to 29 (AIWVVLTVILAAIPIWVCHMV) traverse the membrane as a helical segment. Cysteine 471 lines the heme pocket.

Belongs to the cytochrome P450 family. The cofactor is heme. As to expression, expressed in roots, stolons and stems. Not detected in leaves.

It is found in the membrane. The catalysed reaction is 11-oxo-beta-amyrin + 3 reduced [NADPH--hemoprotein reductase] + 3 O2 = glycyrrhetinate + 3 oxidized [NADPH--hemoprotein reductase] + 4 H2O + 4 H(+). It carries out the reaction 11-oxo-beta-amyrin + reduced [NADPH--hemoprotein reductase] + O2 = 30-hydroxy-11-oxo-beta-amyrin + oxidized [NADPH--hemoprotein reductase] + H2O + H(+). The enzyme catalyses 30-hydroxy-11-oxo-beta-amyrin + reduced [NADPH--hemoprotein reductase] + O2 = glycyrrhetaldehyde + oxidized [NADPH--hemoprotein reductase] + 2 H2O + H(+). It catalyses the reaction glycyrrhetaldehyde + reduced [NADPH--hemoprotein reductase] + O2 = glycyrrhetinate + oxidized [NADPH--hemoprotein reductase] + H2O + 2 H(+). In terms of biological role, involved in the biosynthesis of Glycyrrhetinic acid (GA), a natural product which exhibits anti-inflammatory activity. Involved in the biosynthesis of the triterpenoid saponin glycyrrhizin. Catalyzes three sequential oxidation steps at C-30 of 11-oxo-beta-amyrin. Also able to catalyze C-30 monohydroxylation of beta-amyrin to produce 30-hydroxy-beta-amyrin. May be also responsible for the oxidation at positions C-22 and C-29 in addition to C-30. The sequence is that of 11-oxo-beta-amyrin 30-oxidase from Glycyrrhiza uralensis (Chinese licorice).